We begin with the raw amino-acid sequence, 341 residues long: Anthranilate phosphoribosyltransferase (341 aa).

5-phospho-alpha-D-ribose 1-diphosphate-binding positions include Gly79, 82-83 (GD), Thr87, 89-92 (NIST), 107-115 (KHGNRAVSS), and Ser119. An anthranilate-binding site is contributed by Gly79. Position 91 (Ser91) interacts with Mg(2+). Asn110 provides a ligand contact to anthranilate. Anthranilate is bound at residue Arg165. The Mg(2+) site is built by Asp224 and Glu225.

It belongs to the anthranilate phosphoribosyltransferase family. In terms of assembly, homodimer. It depends on Mg(2+) as a cofactor.

It carries out the reaction N-(5-phospho-beta-D-ribosyl)anthranilate + diphosphate = 5-phospho-alpha-D-ribose 1-diphosphate + anthranilate. The protein operates within amino-acid biosynthesis; L-tryptophan biosynthesis; L-tryptophan from chorismate: step 2/5. Catalyzes the transfer of the phosphoribosyl group of 5-phosphorylribose-1-pyrophosphate (PRPP) to anthranilate to yield N-(5'-phosphoribosyl)-anthranilate (PRA). The chain is Anthranilate phosphoribosyltransferase from Bacillus cereus (strain ATCC 14579 / DSM 31 / CCUG 7414 / JCM 2152 / NBRC 15305 / NCIMB 9373 / NCTC 2599 / NRRL B-3711).